Consider the following 657-residue polypeptide: Zinc finger CCCH domain-containing protein 50 (657 aa).

ANK repeat units lie at residues 68–97 and 104–136; these read EARTPLMVAATYGSAGVVSLLVGLGGCVDV and DGATALHCAASGGSRNAVAVVKLLLAAGADPAT. Over residues 176 to 206 the composition is skewed to low complexity; sequence SVASGSSSPPLSSSPDEGNRSPSSRSSSLSP. The tract at residues 176 to 222 is disordered; the sequence is SVASGSSSPPLSSSPDEGNRSPSSRSSSLSPITVDRGKKEYPVDPTL. 2 C3H1-type zinc fingers span residues 274 to 302 and 311 to 333; these read PYTAVPCPNFRRPGGCPSGDSCEFSHGVF and YRTRLCKEGAACARRICFFAHDE. Residues 507-566 are disordered; the sequence is YSPRALDPSSLAHSPFGGMSPRSPRTMEPTSPLSARVGAPATQRPSVGSPRNSSAWGTVG. The span at 549 to 562 shows a compositional bias: polar residues; sequence QRPSVGSPRNSSAW.

This chain is Zinc finger CCCH domain-containing protein 50, found in Oryza sativa subsp. japonica (Rice).